The sequence spans 305 residues: Tyrosine recombinase XerC (305 aa).

Residues 4–95 (ISIQELIKQW…TVKNFYKFLE (92 aa)) form the Core-binding (CB) domain. A Tyr recombinase domain is found at 116-298 (LLPKALSVDD…SIKHLEAVYN (183 aa)). Active-site residues include Arg159, Lys182, His250, Arg253, and His276. The active-site O-(3'-phospho-DNA)-tyrosine intermediate is Tyr285.

The protein belongs to the 'phage' integrase family. XerC subfamily. Forms a cyclic heterotetrameric complex composed of two molecules of XerC and two molecules of XerD.

The protein resides in the cytoplasm. In terms of biological role, site-specific tyrosine recombinase, which acts by catalyzing the cutting and rejoining of the recombining DNA molecules. The XerC-XerD complex is essential to convert dimers of the bacterial chromosome into monomers to permit their segregation at cell division. It also contributes to the segregational stability of plasmids. This is Tyrosine recombinase XerC from Rickettsia typhi (strain ATCC VR-144 / Wilmington).